The primary structure comprises 156 residues: tRNA (cytidine(34)-2'-O)-methyltransferase (156 aa).

S-adenosyl-L-methionine contacts are provided by G102, L124, and S132.

It belongs to the class IV-like SAM-binding methyltransferase superfamily. RNA methyltransferase TrmH family. TrmL subfamily. As to quaternary structure, homodimer.

It is found in the cytoplasm. It catalyses the reaction cytidine(34) in tRNA + S-adenosyl-L-methionine = 2'-O-methylcytidine(34) in tRNA + S-adenosyl-L-homocysteine + H(+). It carries out the reaction 5-carboxymethylaminomethyluridine(34) in tRNA(Leu) + S-adenosyl-L-methionine = 5-carboxymethylaminomethyl-2'-O-methyluridine(34) in tRNA(Leu) + S-adenosyl-L-homocysteine + H(+). Methylates the ribose at the nucleotide 34 wobble position in the two leucyl isoacceptors tRNA(Leu)(CmAA) and tRNA(Leu)(cmnm5UmAA). Catalyzes the methyl transfer from S-adenosyl-L-methionine to the 2'-OH of the wobble nucleotide. The chain is tRNA (cytidine(34)-2'-O)-methyltransferase from Burkholderia cenocepacia (strain HI2424).